The following is a 407-amino-acid chain: D-3-phosphoglycerate dehydrogenase (407 aa).

Residues 161 to 162, D181, 238 to 240, and D264 contribute to the NAD(+) site; these read HI and ASR. R240 is a catalytic residue. Residue E269 is part of the active site. The active-site Proton donor is the H292. 292–295 contacts NAD(+); the sequence is HIGG. The region spanning 340–407 is the ACT domain; that stretch reads RILNIHNNKP…PNSIKTRVLY (68 aa).

Belongs to the D-isomer specific 2-hydroxyacid dehydrogenase family.

It carries out the reaction (2R)-3-phosphoglycerate + NAD(+) = 3-phosphooxypyruvate + NADH + H(+). The catalysed reaction is (R)-2-hydroxyglutarate + NAD(+) = 2-oxoglutarate + NADH + H(+). The protein operates within amino-acid biosynthesis; L-serine biosynthesis; L-serine from 3-phospho-D-glycerate: step 1/3. Functionally, catalyzes the reversible oxidation of 3-phospho-D-glycerate to 3-phosphonooxypyruvate, the first step of the phosphorylated L-serine biosynthesis pathway. Also catalyzes the reversible oxidation of 2-hydroxyglutarate to 2-oxoglutarate. This chain is D-3-phosphoglycerate dehydrogenase (serA), found in Dictyostelium discoideum (Social amoeba).